The sequence spans 960 residues: Gamma-aminobutyric acid type B receptor subunit 1 (960 aa).

The N-terminal stretch at 1–19 is a signal peptide; the sequence is MLLLLLVPLFLRPLGAGGA. Topologically, residues 20-590 are extracellular; that stretch reads QTPNATSEGC…KTFRFLSQKL (571 aa). N-linked (GlcNAc...) asparagine glycans are attached at residues Asn-23 and Asn-83. Sushi domains lie at 29–95 and 97–158; these read CQII…PSRC and RICS…HCQV. Intrachain disulfides connect Cys-99-Cys-144, Cys-130-Cys-156, and Cys-219-Cys-245. The 4-aminobutanoate site is built by Ser-246, Ser-269, His-286, and Tyr-366. Residues Cys-375 and Cys-409 are joined by a disulfide bond. Residues Asn-408 and Asn-439 are each glycosylated (N-linked (GlcNAc...) asparagine). 4-aminobutanoate is bound at residue Glu-465. N-linked (GlcNAc...) asparagine glycans are attached at residues Asn-481, Asn-501, and Asn-513. The chain crosses the membrane as a helical span at residues 591-611; the sequence is FISVSVLSSLGIVLAVVCLSF. The Cytoplasmic portion of the chain corresponds to 612 to 630; the sequence is NIYNSHVRYIQNSQPNLNN. The chain crosses the membrane as a helical span at residues 631–651; the sequence is LTAVGCSLALAAVFPLGLDGY. Residues 652-666 lie on the Extracellular side of the membrane; it reads HIGRSQFPFVCQARL. The chain crosses the membrane as a helical span at residues 667-687; it reads WLLGLGFSLGYGSMFTKIWWV. At 688–709 the chain is on the cytoplasmic side; sequence HTVFTKKEEKKEWRKTLEPWKL. The chain crosses the membrane as a helical span at residues 710 to 730; sequence YATVGLLVGMDVLTLAIWQIV. The Extracellular segment spans residues 731 to 767; it reads DPLHRTIETFAKEEPKEDIDVSILPQLEHCSSKKMNT. Residues 768-788 form a helical membrane-spanning segment; sequence WLGIFYGYKGLLLLLGIFLAY. The Cytoplasmic portion of the chain corresponds to 789-803; that stretch reads ETKSVSTEKINDHRA. The helical transmembrane segment at 804 to 824 threads the bilayer; it reads VGMAIYNVAVLCLITAPVTMI. At 825–832 the chain is on the extracellular side; sequence LSSQQDAA. Residues 833 to 853 traverse the membrane as a helical segment; sequence FAFASLAIVFSSYITLVVLFV. The Cytoplasmic portion of the chain corresponds to 854 to 960; that stretch reads PKMRRLITRG…DGSRVHLLYK (107 aa). Residues 866-879 are compositionally biased toward polar residues; the sequence is QSETQDTMKTGSST. 2 disordered regions span residues 866–891 and 908–960; these read QSETQDTMKTGSSTNNNEEEKSRLLE and VSEL…LLYK. The stretch at 870–924 forms a coiled coil; sequence QDTMKTGSSTNNNEEEKSRLLEKENRELEKIIAEKEERVSELRHQLQSRQQLRSR. Thr-872 carries the phosphothreonine modification. The tract at residues 887 to 915 is interaction with ATF4; the sequence is SRLLEKENRELEKIIAEKEERVSELRHQL. Phosphothreonine is present on Thr-929.

The protein belongs to the G-protein coupled receptor 3 family. GABA-B receptor subfamily. In terms of assembly, heterodimer of GABBR1 and GABBR2. Homodimers may form, but are inactive. Interacts (via C-terminus) with ATF4 (via leucine zipper domain). Interacts with JAKMIP1. Ubiquitously expressed in tissues including the forebrain, cerebellum, eye, atrium, ventricle, lung, stomach, small intestine, colon, liver, spleen, kidney, urinary bladder and skeletal muscle. Expressed at low levels in testis, and more highly in brain regions. Expression is high the brain regions including cerebral cortical layers, with higher expression in VIb than in the II-V layers, pyramidal CA1-CA3 cell layers and granular cell layers of the hippocampus, granular cell layers of the dentate gyrus, including the caudate, putamen, nucleus accumbens and olfactory tubercle, the granular layer cell layers of the medial habenula, in the cerebellum, predominantly in Purkinje cells, and in the granule cell layer. Also expressed in areas of the brain including the medial geniculate nucleus, substantia nigra, pars compacta, the ventral tegmental area, and in several thalamic, amygdaloid and hypothalamic nuclei, such as the arcuate nucleus of the hypothalamus and mammilary bodies of the hypothalamus. Expressed in the amacrine cell of the retina. In terms of tissue distribution, expressed in the brain, spinal cord, stomach, testis, adrenal gland, pituitary, spleen and prostate. As to expression, expressed in the brain, spinal cord, stomach, testis, kidney and liver. Ubiquitously expressed. In terms of tissue distribution, expressed in the forebrain, cerebellum, eye, kidney and urinary bladder. As to expression, ubiquitously expressed with high expression in the pyramidal CA1-CA3 cell layers of the hippocampus, the granule cell layers of the dentate gyrus and olfactory tubercle, the whole cortex, and Purkinje cells of the cerebellum. Moderate expression in the granule cell layer of the cerebellum.

It is found in the cell membrane. It localises to the postsynaptic cell membrane. The protein localises to the cell projection. Its subcellular location is the dendrite. The protein resides in the perikaryon. Component of a heterodimeric G-protein coupled receptor for GABA, formed by GABBR1 and GABBR2. Within the heterodimeric GABA receptor, only GABBR1 seems to bind agonists, while GABBR2 mediates coupling to G proteins. Ligand binding causes a conformation change that triggers signaling via guanine nucleotide-binding proteins (G proteins) and modulates the activity of down-stream effectors, such as adenylate cyclase. Signaling inhibits adenylate cyclase, stimulates phospholipase A2, activates potassium channels, inactivates voltage-dependent calcium-channels and modulates inositol phospholipid hydrolysis. Calcium is required for high affinity binding to GABA. Plays a critical role in the fine-tuning of inhibitory synaptic transmission. Pre-synaptic GABA receptor inhibits neurotransmitter release by down-regulating high-voltage activated calcium channels, whereas postsynaptic GABA receptor decreases neuronal excitability by activating a prominent inwardly rectifying potassium (Kir) conductance that underlies the late inhibitory postsynaptic potentials. Not only implicated in synaptic inhibition but also in hippocampal long-term potentiation, slow wave sleep, muscle relaxation and antinociception. The polypeptide is Gamma-aminobutyric acid type B receptor subunit 1 (Gabbr1) (Rattus norvegicus (Rat)).